A 233-amino-acid chain; its full sequence is ATP synthase subunit a (233 aa).

The next 5 helical transmembrane spans lie at 29–49 (FKHV…GLIV), 86–106 (VFPL…LGLV), 118–135 (TNAA…YQGL), 188–208 (VLFF…LFLL), and 209–229 (GKVL…KGAF).

Belongs to the ATPase A chain family. F-type ATPases have 2 components, CF(1) - the catalytic core - and CF(0) - the membrane proton channel. CF(1) has five subunits: alpha(3), beta(3), gamma(1), delta(1), epsilon(1). CF(0) has three main subunits: a(1), b(2) and c(9-12). The alpha and beta chains form an alternating ring which encloses part of the gamma chain. CF(1) is attached to CF(0) by a central stalk formed by the gamma and epsilon chains, while a peripheral stalk is formed by the delta and b chains.

The protein resides in the cell inner membrane. Key component of the proton channel; it plays a direct role in the translocation of protons across the membrane. The chain is ATP synthase subunit a from Nitratidesulfovibrio vulgaris (strain ATCC 29579 / DSM 644 / CCUG 34227 / NCIMB 8303 / VKM B-1760 / Hildenborough) (Desulfovibrio vulgaris).